The primary structure comprises 180 residues: Ribulose bisphosphate carboxylase small subunit, chloroplastic (180 aa).

A chloroplast-targeting transit peptide spans 1–57; the sequence is MVSSMMVSSAATFTRASPAQSSMVAPFTGLKSASAFPVTRKPNADLSHLPSNGGRVQ.

Belongs to the RuBisCO small chain family. Heterohexadecamer of 8 large and 8 small subunits.

It localises to the plastid. The protein localises to the chloroplast. RuBisCO catalyzes two reactions: the carboxylation of D-ribulose 1,5-bisphosphate, the primary event in carbon dioxide fixation, as well as the oxidative fragmentation of the pentose substrate. Both reactions occur simultaneously and in competition at the same active site. Although the small subunit is not catalytic it is essential for maximal activity. This chain is Ribulose bisphosphate carboxylase small subunit, chloroplastic, found in Musa acuminata (Banana).